The following is a 243-amino-acid chain: Probable transcriptional regulatory protein PTH_1024 (243 aa).

The protein belongs to the TACO1 family.

It localises to the cytoplasm. The polypeptide is Probable transcriptional regulatory protein PTH_1024 (Pelotomaculum thermopropionicum (strain DSM 13744 / JCM 10971 / SI)).